The chain runs to 211 residues: Uridine kinase (211 aa).

15–22 (GGSGSGKT) contributes to the ATP binding site.

The protein belongs to the uridine kinase family.

The protein resides in the cytoplasm. It carries out the reaction uridine + ATP = UMP + ADP + H(+). It catalyses the reaction cytidine + ATP = CMP + ADP + H(+). It participates in pyrimidine metabolism; CTP biosynthesis via salvage pathway; CTP from cytidine: step 1/3. Its pathway is pyrimidine metabolism; UMP biosynthesis via salvage pathway; UMP from uridine: step 1/1. The sequence is that of Uridine kinase from Lactobacillus helveticus (strain DPC 4571).